Reading from the N-terminus, the 301-residue chain is Probable alpha-L-glutamate ligase (301 aa).

Residues 104 to 287 (LQLLARKGVG…VAGMIINWTE (184 aa)) form the ATP-grasp domain. Residues Lys-141, 178-179 (EF), Asp-187, and 211-213 (RSN) contribute to the ATP site. Positions 248, 260, and 262 each coordinate Mg(2+). 3 residues coordinate Mn(2+): Asp-248, Glu-260, and Asn-262.

It belongs to the RimK family. Mg(2+) serves as cofactor. It depends on Mn(2+) as a cofactor.

The protein is Probable alpha-L-glutamate ligase of Marinobacter nauticus (strain ATCC 700491 / DSM 11845 / VT8) (Marinobacter aquaeolei).